Here is a 1912-residue protein sequence, read N- to C-terminus: Vitellogenin-1 (1912 aa).

Positions 1–15 (MRGLISALVLTLVGS) are cleaved as a signal peptide. In terms of domain architecture, Vitellogenin spans 24–663 (FGENKVYTYN…AGSLIPTMAV (640 aa)). Asparagine 163 carries N-linked (GlcNAc...) asparagine glycosylation. Positions 948 to 972 (DSASGETDNIRDRQSVEDVSSGNSF) are disordered. N-linked (GlcNAc...) asparagine glycosylation occurs at asparagine 991. Disordered stretches follow at residues 1080-1329 (KILD…SYDI) and 1351-1432 (HWHS…RERN). Composition is skewed to low complexity over residues 1092-1124 (NSRS…NRAS) and 1150-1235 (SSSS…SSSK). N-linked (GlcNAc...) asparagine glycosylation is present at asparagine 1206. Positions 1259–1269 (EGERSVHEQKQ) are enriched in basic and acidic residues. A compositionally biased stretch (low complexity) spans 1273 to 1299 (SSSSSSSRASSNSRSTSSSTSSSSESS). Residues 1306-1316 (WKQDREAETKR) show a composition bias toward basic and acidic residues. A compositionally biased stretch (polar residues) spans 1319-1328 (SQFNSHSSYD). Positions 1357–1381 (RTSSSSSSSSSESGSSHSNSSSSDS) are enriched in low complexity. Asparagine 1375 carries an N-linked (GlcNAc...) asparagine glycan. Residues 1397 to 1409 (SHRHGEKAAHSSR) show a composition bias toward basic residues. A VWFD domain is found at 1640 to 1818 (STCEVSKGDF…SWVLLEETCS (179 aa)). Cystine bridges form between cysteine 1642/cysteine 1781 and cysteine 1665/cysteine 1817. Residues asparagine 1662, asparagine 1698, and asparagine 1703 are each glycosylated (N-linked (GlcNAc...) asparagine).

Phosvitin, an egg yolk storage protein, is one of the most highly phosphorylated (10%) proteins in nature. Post-translationally, cathepsin D is responsible for intraoocytic processing of vitellogenin. In terms of processing, may contain intrachain disulfide bonds. As to expression, produced by the liver, secreted into the blood and then sequestered by receptor mediated endocytosis into growing oocytes, where it is generally cleaved, giving rise to the respective yolk components.

In terms of biological role, precursor of the egg-yolk proteins that are sources of nutrients during early development of oviparous organisms. Functionally, phosvitin is believed to be of importance in sequestering calcium, iron and other cations for the developing embryo. This is Vitellogenin-1 (VTG1) from Gallus gallus (Chicken).